The chain runs to 709 residues: Phosphoprotein (709 aa).

Residues 1-35 (MDKLELVNDGLNIIDFIQKNQKEIQKTYGRSSIQQ) form an N0 binding region. Residues 53–92 (SGESEQVEGGMSKDDGDVERRNLEDLSSTSPTDGTIGKRV) are disordered. The span at 63 to 76 (MSKDDGDVERRNLE) shows a compositional bias: basic and acidic residues. The tract at residues 110 to 140 (VVTDVVYHDHGGECTGYGFTSSPERGWSDYT) is interaction with host STAT1. Phosphoserine; by host is present on Ser-257. The interval 265–324 (ISPEDEEPSSVGGKPNESIGRTIEGQSIRDNLQAKDNKSTDVPGAGPKDSAVKEEPPQKR) is disordered. Phosphoserine; by host is present on Ser-350. A disordered region spans residues 384–473 (VQTADRQRPG…VNPVDDNDSL (90 aa)). Composition is skewed to polar residues over residues 416–426 (GTENVPGSKSG) and 444–456 (NAEN…STAV). The interval 475–580 (DKYIMPSDDF…LVSMMIMIPG (106 aa)) is multimerization.

As to quaternary structure, homotetramer. Interacts (via multimerization domain) with polymerase L; this interaction forms the polymerase L-P complex. Interacts (via N-terminus) with N0 (via Ncore); this interaction allows P to chaperon N0 to avoid N polymerization before encapsidation. Interacts (via C-terminus) with N-RNA template (via C-terminus); this interaction positions the polymerase on the template for both transcription and replication. Interacts with host STAT1.

It is found in the virion. The protein resides in the host cytoplasm. Its function is as follows. Essential cofactor of the RNA polymerase L that plays a central role in the transcription and replication by forming the polymerase complex with RNA polymerase L and recruiting L to the genomic N-RNA template for RNA synthesis. Also plays a central role in the encapsidation of nascent RNA chains by forming the encapsidation complex with the nucleocapsid protein N (N-P complex). Acts as a chaperone for newly synthesized free N protein, so-called N0, allowing encapsidation of nascent RNA chains during replication. The nucleoprotein protein N prevents excessive phosphorylation of P, which leads to down-regulation of viral transcription/ replication. Participates, together with N, in the formation of viral factories (viroplasms), which are large inclusions in the host cytoplasm where replication takes place. This chain is Phosphoprotein (P/V/C), found in Nipah virus.